A 2190-amino-acid polypeptide reads, in one-letter code: Voltage-dependent L-type calcium channel subunit alpha-1D (2190 aa).

A compositionally biased stretch (low complexity) spans M1–E10. Disordered regions lie at residues M1–T44 and Q57–R96. The Cytoplasmic portion of the chain corresponds to M1–K121. Composition is skewed to polar residues over residues P31–T44 and N63–S76. A compositionally biased stretch (basic residues) spans Q77 to K88. Residues N108–F404 form an I repeat. A helical transmembrane segment spans residues P122–V140. The Extracellular segment spans residues Y141 to K158. A glycan (N-linked (GlcNAc...) asparagine) is linked at N150. The helical transmembrane segment at V159–Y178 threads the bilayer. The Cytoplasmic portion of the chain corresponds to G179–N190. Residues G191–L209 traverse the membrane as a helical segment. Residues E210 to D230 lie on the Extracellular side of the membrane. A helical membrane pass occupies residues V231 to V249. Over P250–H268 the chain is Cytoplasmic. Residues I269–F288 traverse the membrane as a helical segment. Topologically, residues I289–W376 are extracellular. N324 carries N-linked (GlcNAc...) asparagine glycosylation. E359 contacts Ca(2+). The chain crosses the membrane as a helical span at residues P377–S401. Residues G402 to V544 are Cytoplasmic-facing. A binding to the beta subunit region spans residues Q424 to E441. Residues G478 to V500 are disordered. The stretch at N530–L776 is one II repeat. Residues T545–E564 form a helical membrane-spanning segment. The Extracellular portion of the chain corresponds to H565–A579. The helical transmembrane segment at N580 to L598 threads the bilayer. At G599–S606 the chain is on the cytoplasmic side. A helical transmembrane segment spans residues L607–L625. Residues V626–G635 are Extracellular-facing. A helical membrane pass occupies residues I636–W654. Over A655 to S673 the chain is Cytoplasmic. Residues L674–G694 form a helical membrane-spanning segment. The Extracellular segment spans residues G695–I748. E726 lines the Ca(2+) pocket. The helical transmembrane segment at V749–V773 threads the bilayer. At D774–H907 the chain is on the cytoplasmic side. Over residues K787–K823 the composition is skewed to basic and acidic residues. The segment at K787–I869 is disordered. A compositionally biased stretch (acidic residues) spans V847–E859. An III repeat occupies N894–F1176. The helical transmembrane segment at I908 to A926 threads the bilayer. The Extracellular portion of the chain corresponds to E927–Y942. Residues A943–F962 form a helical membrane-spanning segment. The Cytoplasmic portion of the chain corresponds to G963–N974. The chain crosses the membrane as a helical span at residues Y975 to I993. At Q994 to S999 the chain is on the extracellular side. A helical transmembrane segment spans residues V1000–A1019. The Cytoplasmic segment spans residues K1020–N1038. A helical membrane pass occupies residues I1039 to F1058. Residues K1059–E1148 are Extracellular-facing. Positions R1096–N1186 are dihydropyridine binding. E1122 contributes to the Ca(2+) binding site. Residues I1149 to V1169 form a helical membrane-spanning segment. Topologically, residues G1170–T1226 are cytoplasmic. The stretch at N1213–F1496 is one IV repeat. A helical membrane pass occupies residues G1227–M1245. At Q1246 to I1260 the chain is on the extracellular side. The chain crosses the membrane as a helical span at residues M1261 to F1280. At K1281 to S1297 the chain is on the cytoplasmic side. Residues D1298 to E1319 traverse the membrane as a helical segment. The Extracellular segment spans residues A1320–I1342. The helical transmembrane segment at S1343–G1362 threads the bilayer. Topologically, residues E1363 to Y1381 are cytoplasmic. The helical transmembrane segment at V1382 to F1401 threads the bilayer. At G1402–F1468 the chain is on the extracellular side. Residues R1449 to K1515 form a dihydropyridine binding region. The interval E1461–S1504 is phenylalkylamine binding. The chain crosses the membrane as a helical span at residues A1469 to M1493. Residues D1494 to L2190 are Cytoplasmic-facing. Disordered stretches follow at residues T1736–L1787, F1803–T1833, H1917–F1952, and S1995–Y2025. Residues S1805–E1823 are compositionally biased toward basic and acidic residues. Positions K1824–T1833 are enriched in basic residues.

Belongs to the calcium channel alpha-1 subunit (TC 1.A.1.11) family. CACNA1D subfamily. In terms of assembly, voltage-dependent calcium channels are multisubunit complexes, consisting of alpha-1, alpha-2, beta and delta subunits in a 1:1:1:1 ratio. The channel activity is directed by the pore-forming and voltage-sensitive alpha-1 subunit. In many cases, this subunit is sufficient to generate voltage-sensitive calcium channel activity. The auxiliary subunits beta and alpha-2/delta linked by a disulfide bridge regulate the channel activity. Interacts with RIMBP2. As to expression, expressed in the basilar papilla of the cochlea.

The protein localises to the membrane. The enzyme catalyses Ca(2+)(in) = Ca(2+)(out). Its function is as follows. The isoform alpha-1D gives rise to L-type calcium currents. Long-lasting (L-type) calcium channels belong to the 'high-voltage activated' (HVA) group. This is Voltage-dependent L-type calcium channel subunit alpha-1D (CACNA1D) from Gallus gallus (Chicken).